We begin with the raw amino-acid sequence, 328 residues long: H-2 class I histocompatibility antigen, K-Q alpha chain (328 aa).

The tract at residues 1-71 is alpha-1; that stretch reads PRFISVGYVD…LLRYYNQSAG (71 aa). The Extracellular portion of the chain corresponds to 1-265; sequence PRFISVGYVD…EPPPSAVSNT (265 aa). An N-linked (GlcNAc...) asparagine glycan is attached at N67. Positions 72 to 163 are alpha-2; that stretch reads GSHTIQRMYG…KNGNATLLRT (92 aa). C82 and C145 are oxidised to a cystine. N157 carries an N-linked (GlcNAc...) asparagine glycan. The tract at residues 164–255 is alpha-3; sequence DSPKAHVTHH…GLPKPLTLRW (92 aa). An Ig-like C1-type domain is found at 166-252; it reads PKAHVTHHSR…YHQGLPKPLT (87 aa). Cysteines 184 and 240 form a disulfide. Residues 256-265 are connecting peptide; sequence EPPPSAVSNT. Residues 266–289 traverse the membrane as a helical segment; it reads VIIAVLVVLGAAIVTGAVVAFVMM. Over 290–328 the chain is Cytoplasmic; it reads RRRNTGGKGGDYALAPGSQTSDLSLPDCKVMVHDPHSLA. S310 and S313 each carry phosphoserine.

The protein belongs to the MHC class I family. As to quaternary structure, heterodimer of an alpha chain and a beta chain (beta-2-microglobulin).

It is found in the membrane. Functionally, involved in the presentation of foreign antigens to the immune system. This is H-2 class I histocompatibility antigen, K-Q alpha chain (H2-K1) from Mus musculus (Mouse).